The sequence spans 337 residues: DNA-directed RNA polymerase subunit alpha (337 aa).

The segment at 1–232 (MVREEVRVCT…IDLFIPFLHA (232 aa)) is alpha N-terminal domain (alpha-NTD). The tract at residues 266–337 (EISFQCIFID…FAIDLPKNKF (72 aa)) is alpha C-terminal domain (alpha-CTD).

This sequence belongs to the RNA polymerase alpha chain family. In plastids the minimal PEP RNA polymerase catalytic core is composed of four subunits: alpha, beta, beta', and beta''. When a (nuclear-encoded) sigma factor is associated with the core the holoenzyme is formed, which can initiate transcription.

The protein localises to the plastid. It is found in the chloroplast. It catalyses the reaction RNA(n) + a ribonucleoside 5'-triphosphate = RNA(n+1) + diphosphate. Its function is as follows. DNA-dependent RNA polymerase catalyzes the transcription of DNA into RNA using the four ribonucleoside triphosphates as substrates. In Buxus microphylla (Littleleaf boxwood), this protein is DNA-directed RNA polymerase subunit alpha.